Consider the following 454-residue polypeptide: Mannosylfructose-phosphate synthase (454 aa).

The protein belongs to the glycosyltransferase 1 family. Mg(2+) serves as cofactor. Requires Mn(2+) as cofactor.

The catalysed reaction is beta-D-fructose 6-phosphate + GDP-alpha-D-mannose = beta-D-fructofuranosyl alpha-D-mannopyranoside 6(F)-phosphate + GDP + H(+). It participates in carbohydrate metabolism; mannosylfructose biosynthesis; beta-D-fructofuranosyl alpha-D-mannopyranoside from D-fructose 6-phosphate and GDP-alpha-D-mannose: step 1/2. This chain is Mannosylfructose-phosphate synthase, found in Agrobacterium fabrum (strain C58 / ATCC 33970) (Agrobacterium tumefaciens (strain C58)).